The chain runs to 541 residues: Multidrug transporter protein MdtP (541 aa).

14 helical membrane passes run 14-34, 40-60, 79-99, 112-132, 141-161, 168-188, 201-221, 229-249, 273-293, 307-327, 329-349, 359-379, 401-420, and 492-512; these read LLIT…TIVG, IVGD…YLLT, IVYV…GMAN, GIGG…LFTG, VFGA…GWIV, WVFY…ARGL, IAGI…LSFG, SWQI…FIIV, LIGF…PFFM, IMTP…QLVY, IGIK…FLLL, LVAT…MPIL, FFRS…VMNA, and LHSV…FTLF.

This sequence belongs to the major facilitator superfamily. EmrB family.

Its subcellular location is the cell membrane. Its function is as follows. Multidrug efflux transporter. Contributes to resistance to several antibiotics, including fusidic acid, novobiocin, streptomycin and actinomycin, possibly by pumping these structurally unrelated antibiotics out of cells. The protein is Multidrug transporter protein MdtP of Bacillus subtilis (strain 168).